A 378-amino-acid polypeptide reads, in one-letter code: Schlafen family member 2 (378 aa).

The protein belongs to the Schlafen family. As to expression, mainly expressed in the thymus, lymph node and spleen.

The protein localises to the cytoplasm. In terms of biological role, tRNA-binding protein involved in T-cell mediated immunity. Plays a key role during the metabolic reprograming phase of activated T-cell, when T-cells produce reactive oxygen species (ROS): acts by binding tRNAs and protecting them from cleavage by the oxidative stress-activated ribonuclease angiogenin (ANG). Also required for T-cell quiescence maintenance. The sequence is that of Schlafen family member 2 from Mus musculus (Mouse).